We begin with the raw amino-acid sequence, 467 residues long: Uronate isomerase (467 aa).

Belongs to the metallo-dependent hydrolases superfamily. Uronate isomerase family.

It catalyses the reaction D-glucuronate = D-fructuronate. It carries out the reaction aldehydo-D-galacturonate = keto-D-tagaturonate. It participates in carbohydrate metabolism; pentose and glucuronate interconversion. This Actinobacillus succinogenes (strain ATCC 55618 / DSM 22257 / CCUG 43843 / 130Z) protein is Uronate isomerase.